The primary structure comprises 509 residues: MEELQGYLEIDGSRQQCFLYPLFFQEYIYALAHDHGLNGSILYKPMEIFGYDNKFSSLIGKRLITRMHQQNHLILSVKDSKQNLFVVPNKYFDSQMMSEVFAVIVEIPFSLRLVSSLEEKKIAKSHIRSIQSIHSIFLFFEDKFSHLNHVSDILIPHPIHLEILVQTLRCWIQDAPSLHLLRFFLYESRNSNSLIIPKKSISFFSKRNQRFFLFLYNSHIYGCESIFVFLRKQSSHLRSTSSRTLLERTHLYGKIEHFLVVLRNDFQRTLWLFKDPFMHYVRYQGKAIMASKGTHFLMKKWKYHLVNLWQCHFYLWSQPDSIHINQLYNHSFYFLGYLSRVQLNPSVVRSQMLENLFIIDTAINKFETIVPMIPLIRSLAKAKFCNVSGHPISKPARADSSDSDIIDRFGRICRNLFHYHSGSLKKQSLYRIKYILRLSCARTLARKHKSKVRAFLKRLGSGFFQEFLTEEEQVLSLIFPRTYSTSHRSHSERIWYLDIIRINDLANHE.

The protein belongs to the intron maturase 2 family. MatK subfamily.

The protein localises to the plastid. It localises to the chloroplast. Its function is as follows. Usually encoded in the trnK tRNA gene intron. Probably assists in splicing its own and other chloroplast group II introns. The chain is Maturase K from Drimys granadensis.